The primary structure comprises 53 residues: Natriuretic peptide DNP-2 (53 aa).

Cys7 and Cys23 form a disulfide bridge. The propeptide occupies 39–53; it reads IIRDLHPDSKQSQAA.

It belongs to the natriuretic peptide family. Expressed by the venom gland.

It is found in the secreted. Its function is as follows. Exhibits vasodilator, natriuretic and diuretic properties in animal models and human tissues. Acts by stimulating cGMP via the natriuretic peptide receptor 1 (NPR1). Is a poor agonist of the atrial natriuretic peptide receptor 2 (NPR2). Is not degraded by neutral endopeptidase (NEP/MME). Binds to atrial natriuretic peptide clearance receptor (NPR-C/NPR3), which may be responsible of the removal of DNP from the circulation. Increases calcium uptake and induces histamine release from rat peritoneal mast cells. Increases calcium-activated potassium (KCa) current in gastric antral circular smooth muscle cells by increasing cGMP production and activating inositol trisphosphate receptors (IP3Rs). In vivo, reduces both systolic and diastolic blood pressure with no effect on heart rate, when intravenously injected in conscious rabbits. The sequence is that of Natriuretic peptide DNP-2 from Dendroaspis angusticeps (Eastern green mamba).